Reading from the N-terminus, the 506-residue chain is ATP synthase subunit alpha, chloroplastic (506 aa).

170-177 contacts ATP; it reads GDRQTGKT.

It belongs to the ATPase alpha/beta chains family. As to quaternary structure, F-type ATPases have 2 components, CF(1) - the catalytic core - and CF(0) - the membrane proton channel. CF(1) has five subunits: alpha(3), beta(3), gamma(1), delta(1), epsilon(1). CF(0) has four main subunits: a, b, b' and c.

It is found in the plastid. The protein resides in the chloroplast thylakoid membrane. It carries out the reaction ATP + H2O + 4 H(+)(in) = ADP + phosphate + 5 H(+)(out). Its function is as follows. Produces ATP from ADP in the presence of a proton gradient across the membrane. The alpha chain is a regulatory subunit. This Chlorella vulgaris (Green alga) protein is ATP synthase subunit alpha, chloroplastic.